A 466-amino-acid polypeptide reads, in one-letter code: MSSQPNPTSHPEAASAASAASNDPVVKIDSLDMEARGVGRLENEDGTPGKVIFVEGALPGETVAYRSYRRKPSYEQAHLVEVKQASVMRVKPGCQHFGVCGGCSMQHLDSRAQLAIKQRVLEDNLWHLSKVKPDVVFRPIAGPDWGYRYRARLTVRHVVKKGGVLVGFHERKSSYVADMTHCEILPPHVSAMLVPLRELVGGLSIHDRMPQIELAVGAEVTALVLRVLEPLNDADKDLLRAFADQHQVQFWLQPKGPDTVYPFYPAEQELAYTLPEFGIRMPFKPTDFTQVNHQINRVLIGRALRLLDAKPTDRLLDLFCGIGNFTLPLATQGASVMGIEGSEVLTTRALANAEYNGLAAKTSFACRNLFEVTAEDIAALGRFDRWLVDPPREGALAVCKALAELSQAGSDVLPKRIVYVSCSPATLARDAGLLVHEAGYRLAGAGVVNMFPHTSHVESIAVFERD.

The tract at residues 1 to 22 is disordered; that stretch reads MSSQPNPTSHPEAASAASAASN. Positions 17 to 81 constitute a TRAM domain; the sequence is ASAASNDPVV…PSYEQAHLVE (65 aa). The [4Fe-4S] cluster site is built by Cys-94, Cys-100, Cys-103, and Cys-182. The S-adenosyl-L-methionine site is built by Gln-290, Phe-319, Asn-324, Glu-340, Asn-368, and Asp-389. The Nucleophile role is filled by Cys-422.

Belongs to the class I-like SAM-binding methyltransferase superfamily. RNA M5U methyltransferase family. RlmD subfamily.

The catalysed reaction is uridine(1939) in 23S rRNA + S-adenosyl-L-methionine = 5-methyluridine(1939) in 23S rRNA + S-adenosyl-L-homocysteine + H(+). In terms of biological role, catalyzes the formation of 5-methyl-uridine at position 1939 (m5U1939) in 23S rRNA. This Cupriavidus metallidurans (strain ATCC 43123 / DSM 2839 / NBRC 102507 / CH34) (Ralstonia metallidurans) protein is 23S rRNA (uracil(1939)-C(5))-methyltransferase RlmD.